The primary structure comprises 459 residues: Argininosuccinate lyase (459 aa).

It belongs to the lyase 1 family. Argininosuccinate lyase subfamily.

The protein localises to the cytoplasm. It carries out the reaction 2-(N(omega)-L-arginino)succinate = fumarate + L-arginine. Its pathway is amino-acid biosynthesis; L-arginine biosynthesis; L-arginine from L-ornithine and carbamoyl phosphate: step 3/3. The sequence is that of Argininosuccinate lyase from Staphylococcus aureus (strain Mu3 / ATCC 700698).